Consider the following 713-residue polypeptide: Polyribonucleotide nucleotidyltransferase (713 aa).

Positions 485 and 491 each coordinate Mg(2+). Residues 552–611 (PRIHTIKINPEKIKDVIGKGGSVIRALTEETGTNIELDDDGTVRISAVANEAAMEAIRRI) form the KH domain. Residues 621–689 (NRIYEGKVVR…RQGRVRLSIK (69 aa)) enclose the S1 motif domain.

Belongs to the polyribonucleotide nucleotidyltransferase family. In terms of assembly, component of the RNA degradosome, which is a multiprotein complex involved in RNA processing and mRNA degradation. Mg(2+) is required as a cofactor.

Its subcellular location is the cytoplasm. The enzyme catalyses RNA(n+1) + phosphate = RNA(n) + a ribonucleoside 5'-diphosphate. Involved in mRNA degradation. Catalyzes the phosphorolysis of single-stranded polyribonucleotides processively in the 3'- to 5'-direction. This Aeromonas salmonicida (strain A449) protein is Polyribonucleotide nucleotidyltransferase.